Consider the following 401-residue polypeptide: Aspartate aminotransferase, mitochondrial (401 aa).

At Thr19 the chain carries Phosphothreonine. The residue at position 30 (Lys30) is an N6-acetyllysine. Gly36 is a binding site for substrate. Lys44 bears the N6-acetyllysine; alternate mark. N6-succinyllysine; alternate is present on Lys44. Lys53 carries the post-translational modification N6-acetyllysine. Lys61 carries the post-translational modification N6-acetyllysine; alternate. An N6-succinyllysine; alternate modification is found at Lys61. Tyr67 carries the post-translational modification 3'-nitrotyrosine; alternate. Tyr67 carries the post-translational modification Phosphotyrosine; alternate. N6-acetyllysine; alternate occurs at positions 78, 93, and 130. Residues Lys78, Lys93, and Lys130 each carry the N6-succinyllysine; alternate modification. Trp133 contacts substrate. Lys156 carries the post-translational modification N6-acetyllysine; alternate. Lys156 is modified (N6-succinyllysine; alternate). Asn186 is a binding site for substrate. Lys198 bears the N6-succinyllysine mark. Residue Lys205 is modified to N6-acetyllysine. An N6-acetyllysine; alternate mark is found at Lys250 and Lys267. At Lys250 the chain carries N6-(pyridoxal phosphate)lysine; alternate. An N6-succinyllysine; alternate modification is found at Lys267. Lys273 is modified (N6-acetyllysine). Lys280 bears the N6-acetyllysine; alternate mark. Lys280 bears the N6-succinyllysine; alternate mark. The residue at position 284 (Arg284) is an Asymmetric dimethylarginine. At Lys309 the chain carries N6-acetyllysine; alternate. Lys309 bears the N6-succinyllysine; alternate mark. At Lys316 the chain carries N6-acetyllysine. N6-acetyllysine; alternate is present on Lys334. At Lys334 the chain carries N6-succinyllysine; alternate. An N6-acetyllysine mark is found at Lys335 and Lys358. N6-acetyllysine; alternate is present on residues Lys367 and Lys375. 2 positions are modified to N6-succinyllysine; alternate: Lys367 and Lys375. Position 378 (Arg378) interacts with substrate.

This sequence belongs to the class-I pyridoxal-phosphate-dependent aminotransferase family. In terms of assembly, homodimer. It depends on pyridoxal 5'-phosphate as a cofactor.

The protein localises to the mitochondrion matrix. The protein resides in the cell membrane. It carries out the reaction L-aspartate + 2-oxoglutarate = oxaloacetate + L-glutamate. The catalysed reaction is L-kynurenine + 2-oxoglutarate = kynurenate + L-glutamate + H2O. Functionally, catalyzes the irreversible transamination of the L-tryptophan metabolite L-kynurenine to form kynurenic acid (KA). As a member of the malate-aspartate shuttle, it has a key role in the intracellular NAD(H) redox balance. Is important for metabolite exchange between mitochondria and cytosol, and for amino acid metabolism. Facilitates cellular uptake of long-chain free fatty acids. The chain is Aspartate aminotransferase, mitochondrial (GOT2) from Equus caballus (Horse).